The chain runs to 109 residues: NADH-quinone oxidoreductase subunit K (109 aa).

3 helical membrane passes run 12–32 (LNHY…GLFM), 40–60 (ILMS…AFSV), and 72–92 (IIIL…LLIY).

This sequence belongs to the complex I subunit 4L family. NDH-1 is composed of 14 different subunits. Subunits NuoA, H, J, K, L, M, N constitute the membrane sector of the complex.

Its subcellular location is the cell inner membrane. It carries out the reaction a quinone + NADH + 5 H(+)(in) = a quinol + NAD(+) + 4 H(+)(out). In terms of biological role, NDH-1 shuttles electrons from NADH, via FMN and iron-sulfur (Fe-S) centers, to quinones in the respiratory chain. The immediate electron acceptor for the enzyme in this species is believed to be ubiquinone. Couples the redox reaction to proton translocation (for every two electrons transferred, four hydrogen ions are translocated across the cytoplasmic membrane), and thus conserves the redox energy in a proton gradient. The sequence is that of NADH-quinone oxidoreductase subunit K from Rickettsia bellii (strain RML369-C).